A 207-amino-acid chain; its full sequence is Ribosomal RNA large subunit methyltransferase E (207 aa).

Residues G60, W62, D80, D96, and D121 each coordinate S-adenosyl-L-methionine. Residue K161 is the Proton acceptor of the active site.

This sequence belongs to the class I-like SAM-binding methyltransferase superfamily. RNA methyltransferase RlmE family.

Its subcellular location is the cytoplasm. It carries out the reaction uridine(2552) in 23S rRNA + S-adenosyl-L-methionine = 2'-O-methyluridine(2552) in 23S rRNA + S-adenosyl-L-homocysteine + H(+). Functionally, specifically methylates the uridine in position 2552 of 23S rRNA at the 2'-O position of the ribose in the fully assembled 50S ribosomal subunit. This Ectopseudomonas mendocina (strain ymp) (Pseudomonas mendocina) protein is Ribosomal RNA large subunit methyltransferase E.